A 304-amino-acid polypeptide reads, in one-letter code: MTWPHFEQLAFPDLSRHSSHSTTRGVPSVPMDLSSFSDMLRRQAPHLLPFRGDASLTPTDAVPHGTTIVALKFPGGVVMAGDRRATQGNMIASRDVQKVYITDDYTATGIAGTAAIAVEFARLYAVELEHYEKLEGVALTFAGKVNRLATMVRGNLGAALQGFVALPLLAGFDLDDPDPQAAGRIVSFDAAGGHNLEEEGFQSVGSGSIFAKSSMKKLYHQVTDADSALRVAVEALYDAADDDSATGGPDLVRGIFPTAVLITADGAEEVTQERIAGLAREVIQNRSRADTFGPDAHAPRGTDS.

A propeptide spans 1–65 (removed in mature form; by autocatalysis); the sequence is MTWPHFEQLA…LTPTDAVPHG (65 aa). Catalysis depends on threonine 66, which acts as the Nucleophile.

This sequence belongs to the peptidase T1B family. The 20S proteasome core is composed of 14 alpha and 14 beta subunits that assemble into four stacked heptameric rings, resulting in a barrel-shaped structure. The two inner rings, each composed of seven catalytic beta subunits, are sandwiched by two outer rings, each composed of seven alpha subunits. The catalytic chamber with the active sites is on the inside of the barrel. Has a gated structure, the ends of the cylinder being occluded by the N-termini of the alpha-subunits. Is capped by the proteasome-associated ATPase, ARC.

It localises to the cytoplasm. The enzyme catalyses Cleavage of peptide bonds with very broad specificity.. Its pathway is protein degradation; proteasomal Pup-dependent pathway. The formation of the proteasomal ATPase ARC-20S proteasome complex, likely via the docking of the C-termini of ARC into the intersubunit pockets in the alpha-rings, may trigger opening of the gate for substrate entry. Interconversion between the open-gate and close-gate conformations leads to a dynamic regulation of the 20S proteasome proteolysis activity. In terms of biological role, component of the proteasome core, a large protease complex with broad specificity involved in protein degradation. In Mycobacterium sp. (strain JLS), this protein is Proteasome subunit beta.